We begin with the raw amino-acid sequence, 250 residues long: Acidic endochitinase (250 aa).

Pyrrolidone carboxylic acid is present on Gln1. Residues 1-36 (QNCQCDTTIYCCSQHGYCGNSYDYCGPGCQAGPCWD) enclose the Chitin-binding type-1 domain. Intrachain disulfides connect Cys3-Cys12, Cys5-Cys18, Cys11-Cys25, Cys29-Cys34, Cys66-Cys115, Cys128-Cys136, and Cys218-Cys250. The Proton donor role is filled by Glu110.

It belongs to the glycosyl hydrolase 19 family. Chitinase class I subfamily.

It catalyses the reaction Random endo-hydrolysis of N-acetyl-beta-D-glucosaminide (1-&gt;4)-beta-linkages in chitin and chitodextrins.. In terms of biological role, defense against chitin-containing fungal pathogens. This chain is Acidic endochitinase, found in Dioscorea japonica (Japanese yam).